Here is a 564-residue protein sequence, read N- to C-terminus: Dihydroxy-acid dehydratase (564 aa).

A compositionally biased stretch (basic residues) spans 1–10 (MTDTRTKRRM). Residues 1 to 23 (MTDTRTKRRMNWNSHHITQGDER) are disordered. C57 provides a ligand contact to [2Fe-2S] cluster. Residue D89 coordinates Mg(2+). C130 contributes to the [2Fe-2S] cluster binding site. Residues D131 and K132 each coordinate Mg(2+). K132 carries the post-translational modification N6-carboxylysine. C202 serves as a coordination point for [2Fe-2S] cluster. E454 serves as a coordination point for Mg(2+). The Proton acceptor role is filled by S480.

The protein belongs to the IlvD/Edd family. In terms of assembly, homodimer. Requires [2Fe-2S] cluster as cofactor. Mg(2+) serves as cofactor.

It carries out the reaction (2R)-2,3-dihydroxy-3-methylbutanoate = 3-methyl-2-oxobutanoate + H2O. It catalyses the reaction (2R,3R)-2,3-dihydroxy-3-methylpentanoate = (S)-3-methyl-2-oxopentanoate + H2O. The protein operates within amino-acid biosynthesis; L-isoleucine biosynthesis; L-isoleucine from 2-oxobutanoate: step 3/4. It functions in the pathway amino-acid biosynthesis; L-valine biosynthesis; L-valine from pyruvate: step 3/4. Functions in the biosynthesis of branched-chain amino acids. Catalyzes the dehydration of (2R,3R)-2,3-dihydroxy-3-methylpentanoate (2,3-dihydroxy-3-methylvalerate) into 2-oxo-3-methylpentanoate (2-oxo-3-methylvalerate) and of (2R)-2,3-dihydroxy-3-methylbutanoate (2,3-dihydroxyisovalerate) into 2-oxo-3-methylbutanoate (2-oxoisovalerate), the penultimate precursor to L-isoleucine and L-valine, respectively. This Deinococcus geothermalis (strain DSM 11300 / CIP 105573 / AG-3a) protein is Dihydroxy-acid dehydratase.